The primary structure comprises 314 residues: Taste receptor type 2 member 42 (314 aa).

Residues 1-7 are Extracellular-facing; that stretch reads MATELDK. Residues 8 to 28 form a helical membrane-spanning segment; the sequence is IFLILEIAEFIIGMLGNVFIG. The Cytoplasmic segment spans residues 29–50; sequence LVNCSEGIKNQKVFSADFILTC. The chain crosses the membrane as a helical span at residues 51-71; that stretch reads LAISTIGQLFVILFDSFLVGL. Residues 72-101 are Extracellular-facing; sequence ASHLYTTYRLGKPVIMLWHMTNHLTTWLAT. Residues 102 to 122 form a helical membrane-spanning segment; sequence CLSIFYFFKIAHFPHSLFLWL. Residues 123–127 lie on the Cytoplasmic side of the membrane; that stretch reads RWRMN. Residues 128–148 traverse the membrane as a helical segment; the sequence is GMIVMLLILSLFLLIFNSLVL. Residues 149 to 187 lie on the Extracellular side of the membrane; it reads EIFIDISLNIIDKSNLTLYLDESKTVYDKLSILKTLLSL. N-linked (GlcNAc...) asparagine glycosylation is present at N163. Residues 188–208 form a helical membrane-spanning segment; that stretch reads TSFIPFSLSLTSLLFLFLSLV. The Cytoplasmic portion of the chain corresponds to 209-238; sequence RHTRNLKLSSLGSRDSSTEAHRRAMKMVMS. Residues 239–259 form a helical membrane-spanning segment; sequence FLFLFIVHFFSLQVANWIFFM. Residues 260–265 lie on the Extracellular side of the membrane; that stretch reads LWNNKY. A helical transmembrane segment spans residues 266–286; it reads IKFAMLALNAFPSCHSFILIL. Over 287–314 the chain is Cytoplasmic; it reads GNSKLRQTAVRLLWHLRNYTKTPNPLPL.

Belongs to the G-protein coupled receptor T2R family.

It localises to the membrane. Receptor that may play a role in the perception of bitterness and is gustducin-linked. May play a role in sensing the chemical composition of the gastrointestinal content. The activity of this receptor may stimulate alpha gustducin, mediate PLC-beta-2 activation and lead to the gating of TRPM5. The chain is Taste receptor type 2 member 42 (TAS2R42) from Pan troglodytes (Chimpanzee).